The primary structure comprises 239 residues: Phosphoribosylaminoimidazole-succinocarboxamide synthase (239 aa).

The protein belongs to the SAICAR synthetase family.

The enzyme catalyses 5-amino-1-(5-phospho-D-ribosyl)imidazole-4-carboxylate + L-aspartate + ATP = (2S)-2-[5-amino-1-(5-phospho-beta-D-ribosyl)imidazole-4-carboxamido]succinate + ADP + phosphate + 2 H(+). It functions in the pathway purine metabolism; IMP biosynthesis via de novo pathway; 5-amino-1-(5-phospho-D-ribosyl)imidazole-4-carboxamide from 5-amino-1-(5-phospho-D-ribosyl)imidazole-4-carboxylate: step 1/2. The polypeptide is Phosphoribosylaminoimidazole-succinocarboxamide synthase (Bacillus cereus (strain G9842)).